The following is a 565-amino-acid chain: NAD-dependent malic enzyme (565 aa).

Tyr-104 (proton donor) is an active-site residue. Arg-157 serves as a coordination point for NAD(+). Lys-175 serves as the catalytic Proton acceptor. 3 residues coordinate a divalent metal cation: Glu-246, Asp-247, and Asp-270. NAD(+) is bound by residues Asp-270 and Asn-418.

It belongs to the malic enzymes family. As to quaternary structure, homotetramer. Requires Mg(2+) as cofactor. The cofactor is Mn(2+).

The catalysed reaction is (S)-malate + NAD(+) = pyruvate + CO2 + NADH. The enzyme catalyses oxaloacetate + H(+) = pyruvate + CO2. The sequence is that of NAD-dependent malic enzyme from Pectobacterium atrosepticum (strain SCRI 1043 / ATCC BAA-672) (Erwinia carotovora subsp. atroseptica).